Here is a 486-residue protein sequence, read N- to C-terminus: Cardiolipin synthase A (486 aa).

A run of 2 helical transmembrane segments spans residues 3–23 and 38–58; these read TFYTVVNWLVILGYWLLIAGV and MAWLLIIYILPLVGIIAYLSF. PLD phosphodiesterase domains lie at 219 to 246 and 399 to 426; these read MDLRQHRKMVMIDNYIAYTGSMNMVDPR and EGGLLHTKSVLVDGELSLVGTVNLDMRS. Residues H224, K226, D231, H404, K406, and D411 contribute to the active site.

It belongs to the phospholipase D family. Cardiolipin synthase subfamily. ClsA sub-subfamily.

The protein localises to the cell inner membrane. The catalysed reaction is 2 a 1,2-diacyl-sn-glycero-3-phospho-(1'-sn-glycerol) = a cardiolipin + glycerol. Its function is as follows. Catalyzes the reversible phosphatidyl group transfer from one phosphatidylglycerol molecule to another to form cardiolipin (CL) (diphosphatidylglycerol) and glycerol. The chain is Cardiolipin synthase A from Klebsiella pneumoniae subsp. pneumoniae (strain ATCC 700721 / MGH 78578).